The primary structure comprises 90 residues: Sec-independent protein translocase protein TatA (90 aa).

A helical transmembrane segment spans residues Met1–Gly21. The segment at Gly42–Gly90 is disordered.

Belongs to the TatA/E family. As to quaternary structure, the Tat system comprises two distinct complexes: a TatABC complex, containing multiple copies of TatA, TatB and TatC subunits, and a separate TatA complex, containing only TatA subunits. Substrates initially bind to the TatABC complex, which probably triggers association of the separate TatA complex to form the active translocon.

Its subcellular location is the cell inner membrane. Functionally, part of the twin-arginine translocation (Tat) system that transports large folded proteins containing a characteristic twin-arginine motif in their signal peptide across membranes. TatA could form the protein-conducting channel of the Tat system. This Methylobacterium nodulans (strain LMG 21967 / CNCM I-2342 / ORS 2060) protein is Sec-independent protein translocase protein TatA.